A 486-amino-acid chain; its full sequence is FAD-dependent oxidoreductase domain-containing protein 1 (486 aa).

Residues 62–82 (EHSDVVIVGGGVLGLSVAYWL) traverse the membrane as a helical segment.

Associates with components of the mitochondrial respiratory chain complex I. FAD is required as a cofactor.

The protein resides in the mitochondrion inner membrane. Functionally, required for the assembly of the mitochondrial membrane respiratory chain NADH dehydrogenase (Complex I). Involved in mid-late stages of complex I assembly. This is FAD-dependent oxidoreductase domain-containing protein 1 from Homo sapiens (Human).